A 106-amino-acid polypeptide reads, in one-letter code: Ribonuclease P protein component 4 (106 aa).

Zn(2+)-binding residues include C63, C66, C89, and C92.

The protein belongs to the eukaryotic/archaeal RNase P protein component 4 family. Consists of a catalytic RNA component and at least 4-5 protein subunits. It depends on Zn(2+) as a cofactor.

The protein resides in the cytoplasm. It catalyses the reaction Endonucleolytic cleavage of RNA, removing 5'-extranucleotides from tRNA precursor.. Its function is as follows. Part of ribonuclease P, a protein complex that generates mature tRNA molecules by cleaving their 5'-ends. This is Ribonuclease P protein component 4 from Methanosphaerula palustris (strain ATCC BAA-1556 / DSM 19958 / E1-9c).